The following is an 878-amino-acid chain: AP-2 complex subunit alpha (878 aa).

Belongs to the adaptor complexes large subunit family. In terms of assembly, adaptor protein complex 2 (AP-2) is a heterotetramer composed of two large adaptins (alpha-type subunit apl3 and beta-type subunit apl1), a medium chain (mu-type subunit apm4) and a small adaptin (sigma-type subunit aps2).

The protein localises to the cell membrane. It localises to the membrane. The protein resides in the coated pit. Functionally, adaptins are components of the adaptor complexes which link clathrin to receptors in coated vesicles. Clathrin-associated protein complexes are believed to interact with the cytoplasmic tails of membrane proteins, leading to their selection and concentration. Alpha adaptin is a subunit of the plasma membrane adaptor. The polypeptide is AP-2 complex subunit alpha (apl3) (Schizosaccharomyces pombe (strain 972 / ATCC 24843) (Fission yeast)).